A 147-amino-acid chain; its full sequence is Protein MioC (147 aa).

Positions 4 to 143 constitute a Flavodoxin-like domain; the sequence is ITLISGSTLG…PAEEWLGSWV (140 aa).

The protein belongs to the flavodoxin family. MioC subfamily. Homodimer. FMN serves as cofactor.

In terms of biological role, probable electron transporter required for biotin synthase activity. The protein is Protein MioC (mioC) of Escherichia coli (strain K12).